The following is a 607-amino-acid chain: Guanine nucleotide-binding protein-like 1 (607 aa).

The span at 1–14 (MPRKKPFSVKQKKK) shows a compositional bias: basic residues. The tract at residues 1–81 (MPRKKPFSVK…GPRGYDPNRY (81 aa)) is disordered. Residues 15–26 (QLQDKRERKRGL) show a composition bias toward basic and acidic residues. Phosphoserine occurs at positions 32, 33, and 34. Phosphothreonine is present on residues Thr-48 and Thr-50. Residues Ser-51 and Ser-68 each carry the phosphoserine modification. One can recognise a CP-type G domain in the interval 178-418 (WRQLWRVLEM…LCDCPGLIFP (241 aa)). 225 to 228 (NKVD) provides a ligand contact to GTP. Ser-324 carries the phosphoserine modification. GTP contacts are provided by residues 367-374 (GFPNVGKS) and 411-415 (DCPGL). The tract at residues 544–607 (GRVGPAGDEE…PYALLGEDEC (64 aa)) is disordered. The segment covering 550–585 (GDEEEEEEEELSSSCEEEGEEDRDADEEGEGDEDTP) has biased composition (acidic residues). A phosphoserine mark is found at Ser-561, Ser-562, and Ser-563.

This sequence belongs to the TRAFAC class YlqF/YawG GTPase family.

Possible regulatory or functional link with the histocompatibility cluster. This is Guanine nucleotide-binding protein-like 1 (Gnl1) from Mus musculus (Mouse).